Consider the following 528-residue polypeptide: Chaperonin GroEL, chloroplastic (528 aa).

ATP-binding positions include 29-32 (TLGP), 86-90 (DGTTT), Gly-414, and Asp-496.

The protein belongs to the chaperonin (HSP60) family. Forms a cylinder of 14 subunits composed of two heptameric rings stacked back-to-back. Interacts with the co-chaperonin GroES.

The protein localises to the plastid. It localises to the chloroplast. The enzyme catalyses ATP + H2O + a folded polypeptide = ADP + phosphate + an unfolded polypeptide.. Functionally, together with its co-chaperonin GroES, plays an essential role in assisting protein folding. The GroEL-GroES system forms a nano-cage that allows encapsulation of the non-native substrate proteins and provides a physical environment optimized to promote and accelerate protein folding. The sequence is that of Chaperonin GroEL, chloroplastic from Gracilaria tenuistipitata var. liui (Red alga).